The chain runs to 390 residues: Multidrug export protein EmrA (390 aa).

The Cytoplasmic portion of the chain corresponds to 1 to 24 (MSANAETQTPQQPVKKSGKRKRLL). A helical membrane pass occupies residues 25–45 (LLLTLLFIIIAVAIGIYWFLV). The Periplasmic segment spans residues 46–390 (LRHFEETDDA…IDDIVKANAG (345 aa)). A coiled-coil region spans residues 120–180 (INSKQLQANI…QAQLDVAIQQ (61 aa)).

Belongs to the membrane fusion protein (MFP) (TC 8.A.1) family. As to quaternary structure, homodimer and homotrimer. Part of the tripartite efflux system EmrAB-TolC, which is composed of an inner membrane transporter, EmrB, a periplasmic membrane fusion protein, EmrA, and an outer membrane component, TolC. The complex forms a large protein conduit and can translocate molecules across both the inner and outer membranes. Interacts with EmrB. EmrAB complex forms a dimer in vitro.

The protein localises to the cell inner membrane. Part of the tripartite efflux system EmrAB-TolC, which confers resistance to antibiotics such as CCCP, FCCP, 2,4-dinitrophenol and nalidixic acid. EmrA is a drug-binding protein that provides a physical link between EmrB and TolC. The protein is Multidrug export protein EmrA (emrA) of Escherichia coli (strain K12).